A 954-amino-acid chain; its full sequence is Glycine dehydrogenase (decarboxylating) (954 aa).

Lys704 bears the N6-(pyridoxal phosphate)lysine mark.

This sequence belongs to the GcvP family. The glycine cleavage system is composed of four proteins: P, T, L and H. The cofactor is pyridoxal 5'-phosphate.

The catalysed reaction is N(6)-[(R)-lipoyl]-L-lysyl-[glycine-cleavage complex H protein] + glycine + H(+) = N(6)-[(R)-S(8)-aminomethyldihydrolipoyl]-L-lysyl-[glycine-cleavage complex H protein] + CO2. The glycine cleavage system catalyzes the degradation of glycine. The P protein binds the alpha-amino group of glycine through its pyridoxal phosphate cofactor; CO(2) is released and the remaining methylamine moiety is then transferred to the lipoamide cofactor of the H protein. The protein is Glycine dehydrogenase (decarboxylating) of Rhizobium johnstonii (strain DSM 114642 / LMG 32736 / 3841) (Rhizobium leguminosarum bv. viciae).